The following is a 173-amino-acid chain: Adenine phosphoribosyltransferase (173 aa).

The protein belongs to the purine/pyrimidine phosphoribosyltransferase family. In terms of assembly, homodimer.

Its subcellular location is the cytoplasm. It catalyses the reaction AMP + diphosphate = 5-phospho-alpha-D-ribose 1-diphosphate + adenine. Its pathway is purine metabolism; AMP biosynthesis via salvage pathway; AMP from adenine: step 1/1. In terms of biological role, catalyzes a salvage reaction resulting in the formation of AMP, that is energically less costly than de novo synthesis. The chain is Adenine phosphoribosyltransferase from Solibacter usitatus (strain Ellin6076).